The sequence spans 624 residues: Methyl-accepting chemotaxis protein McpG (624 aa).

The chain crosses the membrane as a helical span at residues 11-31 (ILLAASLIVILAFSLFTLYND). The Cache domain maps to 36 to 254 (NAIREDLENY…GLPSANWYIG (219 aa)). A helical transmembrane segment spans residues 272-292 (SAVIATVVAVVIIIGLLGLLI). The 55-residue stretch at 293–347 (RVLMQPLHTMTRAMEDIAEGEGDLTKRLHIHSHDEFGVLGNAFNRFVERIHSSIR) folds into the HAMP domain. In terms of domain architecture, Methyl-accepting transducer spans 352-588 (ATEQVNEVAL…AINMDINEIN (237 aa)).

This sequence belongs to the methyl-accepting chemotaxis (MCP) protein family.

It is found in the cell membrane. Functionally, chemotactic-signal transducers respond to changes in the concentration of attractants and repellents in the environment, transduce a signal from the outside to the inside of the cell, and facilitate sensory adaptation through the variation of the level of methylation. McpG is a specific gamma-aminobutyric acid (GABA) chemoreceptor that recognizes GABA over a wide range of environmental conditions. Contributes to attraction to and colonization of plant roots. The polypeptide is Methyl-accepting chemotaxis protein McpG (Pseudomonas putida (strain ATCC 47054 / DSM 6125 / CFBP 8728 / NCIMB 11950 / KT2440)).